A 361-amino-acid chain; its full sequence is D-alanine--D-alanine ligase (361 aa).

The 211-residue stretch at Lys-134–Asn-344 folds into the ATP-grasp domain. Arg-167 to Glu-222 is an ATP binding site. Residues Asp-297, Glu-311, and Asn-313 each coordinate Mg(2+).

Belongs to the D-alanine--D-alanine ligase family. It depends on Mg(2+) as a cofactor. Requires Mn(2+) as cofactor.

It localises to the cytoplasm. The enzyme catalyses 2 D-alanine + ATP = D-alanyl-D-alanine + ADP + phosphate + H(+). Its pathway is cell wall biogenesis; peptidoglycan biosynthesis. Functionally, cell wall formation. This is D-alanine--D-alanine ligase from Borrelia garinii subsp. bavariensis (strain ATCC BAA-2496 / DSM 23469 / PBi) (Borreliella bavariensis).